The primary structure comprises 363 residues: 3-methyl-D-ornithine--L-lysine ligase (363 aa).

K10 provides a ligand contact to ATP. L-lysine is bound at residue 11 to 12 (LQ). ATP is bound by residues D31, 49–50 (DV), and 72–73 (EN). Residue E72 coordinates L-lysine. Residues K104, K131, S138, and 160–163 (EEYV) each bind ADP. D-ornithine is bound by residues 169–171 (SLE) and D225. Mg(2+) is bound by residues E227, E239, and D241. Residue E239 coordinates ADP. D-ornithine-binding positions include 243–248 (RFPSQT) and E302. L-lysine contacts are provided by S246 and E302.

It belongs to the PylC family. Requires Mg(2+) as cofactor.

The catalysed reaction is (3R)-3-methyl-D-ornithine + L-lysine + ATP = (3R)-3-methyl-D-ornithyl-N(6)-L-lysine + ADP + phosphate + H(+). The protein operates within amino-acid biosynthesis; L-pyrrolysine biosynthesis. Is required for the biosynthesis of pyrrolysine. Catalyzes the ATP-dependent ligation between (3R)-3-methyl-D-ornithine and L-lysine, leading to (3R)-3-methyl-D-ornithyl-N6-L-lysine. This Methanosarcina barkeri (strain Fusaro / DSM 804) protein is 3-methyl-D-ornithine--L-lysine ligase.